The chain runs to 231 residues: Thiamine import ATP-binding protein ThiQ (231 aa).

Residues 2–230 enclose the ABC transporter domain; that stretch reads LHLDRLLIRQ…PPPALRAYLG (229 aa). 32–39 serves as a coordination point for ATP; sequence GPSGGGKS.

The protein belongs to the ABC transporter superfamily. Thiamine importer (TC 3.A.1.19.1) family. In terms of assembly, the complex is composed of two ATP-binding proteins (ThiQ), two transmembrane proteins (ThiP) and a solute-binding protein (ThiB).

The protein resides in the cell inner membrane. It catalyses the reaction thiamine(out) + ATP + H2O = thiamine(in) + ADP + phosphate + H(+). Its function is as follows. Part of the ABC transporter complex ThiBPQ involved in thiamine import. Responsible for energy coupling to the transport system. This chain is Thiamine import ATP-binding protein ThiQ, found in Cereibacter sphaeroides (strain ATCC 17023 / DSM 158 / JCM 6121 / CCUG 31486 / LMG 2827 / NBRC 12203 / NCIMB 8253 / ATH 2.4.1.) (Rhodobacter sphaeroides).